The sequence spans 570 residues: CDKN2A-interacting protein (570 aa).

A2 carries the N-acetylalanine modification. Residues 19-126 (VETLRCEGET…KVKKRGISSS (108 aa)) form the XRN2-binding (XTBD) domain. Residues 122-345 (GISSSNEGVE…TSLLMPKSSS (224 aa)) form a disordered region. S124 bears the Phosphoserine mark. Residues 147-162 (VERDHGKKSAKTDRSA) show a composition bias toward basic and acidic residues. The span at 167–183 (SSGSKGSSTKSESSGTS) shows a compositional bias: low complexity. A Glycyl lysine isopeptide (Lys-Gly) (interchain with G-Cter in SUMO1) cross-link involves residue K176. Positions 184-198 (ARSNSGVSHQNSSTS) are enriched in polar residues. Positions 203–221 (SVCSQSSSNSSQVTSAGSG) are enriched in low complexity. Residues 224–233 (SEPEAPDKHG) are compositionally biased toward basic and acidic residues. The residue at position 234 (S234) is a Phosphoserine. 2 stretches are compositionally biased toward low complexity: residues 234–248 (SASFVSSLLKSSLNS) and 271–301 (SSVSVSQSSSEIEVPLLGSSGSSEVELPLLS). Residues 302–317 (CKSSSETASSGLTTKA) are compositionally biased toward polar residues. Positions 318–345 (SSEANISSSVSKNSSSSGTSLLMPKSSS) are enriched in low complexity. Phosphoserine is present on S378. The tract at residues 383-407 (SQLASKSSSQSSTSQLPSKSTSQSS) is disordered. One can recognise a DRBM domain in the interval 452 to 527 (NHGELLNAAI…SREALKLFLK (76 aa)).

It belongs to the CARF family. As to quaternary structure, interacts with CDKN2A/p14ARF, p53/TP53 and MDM2. Interacts with CHEK2 and MAPK3. Interacts with XRN2. Post-translationally, may be ubiquitinated.

The protein localises to the nucleus. It localises to the nucleoplasm. Functionally, regulates DNA damage response and cell proliferation in a dose-dependent manner through a number of signaling pathways involved in cell proliferation, apoptosis and senescence. The protein is CDKN2A-interacting protein (Cdkn2aip) of Rattus norvegicus (Rat).